The sequence spans 212 residues: Imidazole glycerol phosphate synthase subunit HisH (212 aa).

The 210-residue stretch at T3–W212 folds into the Glutamine amidotransferase type-1 domain. C81 (nucleophile) is an active-site residue. Catalysis depends on residues H190 and E192.

Heterodimer of HisH and HisF.

Its subcellular location is the cytoplasm. It carries out the reaction 5-[(5-phospho-1-deoxy-D-ribulos-1-ylimino)methylamino]-1-(5-phospho-beta-D-ribosyl)imidazole-4-carboxamide + L-glutamine = D-erythro-1-(imidazol-4-yl)glycerol 3-phosphate + 5-amino-1-(5-phospho-beta-D-ribosyl)imidazole-4-carboxamide + L-glutamate + H(+). It catalyses the reaction L-glutamine + H2O = L-glutamate + NH4(+). The protein operates within amino-acid biosynthesis; L-histidine biosynthesis; L-histidine from 5-phospho-alpha-D-ribose 1-diphosphate: step 5/9. Its function is as follows. IGPS catalyzes the conversion of PRFAR and glutamine to IGP, AICAR and glutamate. The HisH subunit catalyzes the hydrolysis of glutamine to glutamate and ammonia as part of the synthesis of IGP and AICAR. The resulting ammonia molecule is channeled to the active site of HisF. The protein is Imidazole glycerol phosphate synthase subunit HisH of Pseudomonas putida (strain ATCC 47054 / DSM 6125 / CFBP 8728 / NCIMB 11950 / KT2440).